Consider the following 132-residue polypeptide: MAEEGIAAGGVMDVNTALQEVLKTALIHDGLARGIREAAKALDKRQAHLCVLASNCDEPMYVKLVEALCAEHQINLIKVDDNKKLGEWVGLCKIDREGKPRKVVGCSCVVVKDYGKESQAKDVIEEYFKCKK.

N-acetylalanine is present on alanine 2. Lysine 129 bears the N6-succinyllysine mark.

Belongs to the eukaryotic ribosomal protein eS12 family. In terms of assembly, part of the small subunit (SSU) processome, composed of more than 70 proteins and the RNA chaperone small nucleolar RNA (snoRNA) U3. Subunit of the 40S ribosomal complex.

It is found in the nucleus. The protein resides in the nucleolus. In terms of biological role, part of the small subunit (SSU) processome, first precursor of the small eukaryotic ribosomal subunit. During the assembly of the SSU processome in the nucleolus, many ribosome biogenesis factors, an RNA chaperone and ribosomal proteins associate with the nascent pre-rRNA and work in concert to generate RNA folding, modifications, rearrangements and cleavage as well as targeted degradation of pre-ribosomal RNA by the RNA exosome. Subunit of the 40S ribosomal complex. The polypeptide is Small ribosomal subunit protein eS12 (Rps12) (Mus musculus (Mouse)).